The chain runs to 301 residues: GTPase Era (301 aa).

The region spanning 4–173 (KAGFVALIGK…LECISKYLSP (170 aa)) is the Era-type G domain. The interval 12-19 (GKPNAGKS) is G1. 12-19 (GKPNAGKS) lines the GTP pocket. Positions 38-42 (NATRK) are G2. A G3 region spans residues 64–67 (DTPG). GTP-binding positions include 64-68 (DTPGL) and 122-125 (SKID). The segment at 122–125 (SKID) is G4. The G5 stretch occupies residues 152 to 154 (LSA). Residues 204 to 280 (LSDEIPYESD…FLNLQVIAQK (77 aa)) form the KH type-2 domain.

It belongs to the TRAFAC class TrmE-Era-EngA-EngB-Septin-like GTPase superfamily. Era GTPase family. Monomer.

It localises to the cytoplasm. The protein localises to the cell inner membrane. Functionally, an essential GTPase that binds both GDP and GTP, with rapid nucleotide exchange. Plays a role in 16S rRNA processing and 30S ribosomal subunit biogenesis and possibly also in cell cycle regulation and energy metabolism. This Helicobacter pylori (strain G27) protein is GTPase Era.